A 95-amino-acid chain; its full sequence is Small ribosomal subunit protein bS20 (95 aa).

The interval 1–22 is disordered; that stretch reads MANIKSQIKRNRTNENNRLRNK. A compositionally biased stretch (basic and acidic residues) spans 12–22; that stretch reads RTNENNRLRNK.

Belongs to the bacterial ribosomal protein bS20 family.

Binds directly to 16S ribosomal RNA. The polypeptide is Small ribosomal subunit protein bS20 (Tropheryma whipplei (strain TW08/27) (Whipple's bacillus)).